A 217-amino-acid chain; its full sequence is 7-cyano-7-deazaguanine synthase (217 aa).

Residue 7 to 17 (LSGGMDSTTLL) coordinates ATP. 4 residues coordinate Zn(2+): Cys183, Cys191, Cys194, and Cys197.

The protein belongs to the QueC family. The cofactor is Zn(2+).

It carries out the reaction 7-carboxy-7-deazaguanine + NH4(+) + ATP = 7-cyano-7-deazaguanine + ADP + phosphate + H2O + H(+). Its pathway is purine metabolism; 7-cyano-7-deazaguanine biosynthesis. In terms of biological role, catalyzes the ATP-dependent conversion of 7-carboxy-7-deazaguanine (CDG) to 7-cyano-7-deazaguanine (preQ(0)). In Methanoregula boonei (strain DSM 21154 / JCM 14090 / 6A8), this protein is 7-cyano-7-deazaguanine synthase.